Consider the following 198-residue polypeptide: MNLLILFFGYLFGSFPSGYLAGRIAKGIDIRSLGSGSTGATNVLRHIGKRAAITVFLLDVFKGVLSILLAKYLLLNDSWQVAVGLSTLIGHIWPVWLNWKGGKAVATGLGIFLGLSWQVGLATLGVFIIMITLFRIVSLASVSASLALPLIMFLSFSGSNLSLPFLIVSLLAMILVIWRHRENIVRLIRGKEPRIGQP.

Transmembrane regions (helical) follow at residues 1-21 (MNLLILFFGYLFGSFPSGYLA), 55-75 (VFLLDVFKGVLSILLAKYLLL), 79-99 (WQVAVGLSTLIGHIWPVWLNW), 111-131 (IFLGLSWQVGLATLGVFIIMI), 136-156 (IVSLASVSASLALPLIMFLSF), and 158-178 (GSNLSLPFLIVSLLAMILVIW).

Belongs to the PlsY family. In terms of assembly, probably interacts with PlsX.

The protein localises to the cell inner membrane. The catalysed reaction is an acyl phosphate + sn-glycerol 3-phosphate = a 1-acyl-sn-glycero-3-phosphate + phosphate. The protein operates within lipid metabolism; phospholipid metabolism. Its function is as follows. Catalyzes the transfer of an acyl group from acyl-phosphate (acyl-PO(4)) to glycerol-3-phosphate (G3P) to form lysophosphatidic acid (LPA). This enzyme utilizes acyl-phosphate as fatty acyl donor, but not acyl-CoA or acyl-ACP. The protein is Glycerol-3-phosphate acyltransferase of Prochlorococcus marinus (strain NATL2A).